Here is a 512-residue protein sequence, read N- to C-terminus: MVGMYIIIPIVTFIIGGLLAWLGMRFLLKSKYDSVLQEAEKEAEVIKKNKMLEVKEKFLHLKADLEKQVSQRNAKIQSVETKLKQRELTMNQRQEELQRRNNEVEAVKENLSSQLELVEKKKQDLDKLHQKEVEHLEAISGLSAEEAKERLIESLKDEAKTQAASYINEIVEEAKMTANKEAKKIVIQSIQRVATETAIENSITVFHIESDEIKGRIIGREGRNIRALEAATGIEIVVDDTPEAIVLSGFDPVRREIARLALHQLVQDGRIHPARIEEVVTKVKKQVEDEVVETGKRTVIDLGVHGLHPELIRMIGKMKYRSSYGQNLLQHARETANLCAVMASELGLNPKKAKRAGLLHDIGKVPDDEPELPHAILGMKLCEKYKEKPDICNAVGAHHDEVEMQTLLAPIVQVCDAISGARPGARREIVEAYIKRLNDLEQLALSYPGVVKTYAIQAGRELRVIVGADKIDDKDTENLSAEIAKKIQDEMTYPGQVKITVIRETRAVSYAK.

Residues 2-22 form a helical membrane-spanning segment; the sequence is VGMYIIIPIVTFIIGGLLAWL. The region spanning 202–262 is the KH domain; it reads SITVFHIESD…VRREIARLAL (61 aa). In terms of domain architecture, HD spans 328 to 421; the sequence is LLQHARETAN…VQVCDAISGA (94 aa).

The protein belongs to the RNase Y family.

Its subcellular location is the cell membrane. Endoribonuclease that initiates mRNA decay. This Parabacteroides distasonis (strain ATCC 8503 / DSM 20701 / CIP 104284 / JCM 5825 / NCTC 11152) protein is Ribonuclease Y.